The sequence spans 350 residues: Geranylgeranyl pyrophosphate synthase (350 aa).

Isopentenyl diphosphate is bound by residues K66, R69, and H98. 2 residues coordinate Mg(2+): D105 and D109. R114 lines the dimethylallyl diphosphate pocket. Residue R115 participates in isopentenyl diphosphate binding. Residues K200, T201, Q236, N243, and K263 each coordinate dimethylallyl diphosphate.

It belongs to the FPP/GGPP synthase family. Mg(2+) serves as cofactor.

The enzyme catalyses isopentenyl diphosphate + dimethylallyl diphosphate = (2E)-geranyl diphosphate + diphosphate. It carries out the reaction isopentenyl diphosphate + (2E)-geranyl diphosphate = (2E,6E)-farnesyl diphosphate + diphosphate. The catalysed reaction is isopentenyl diphosphate + (2E,6E)-farnesyl diphosphate = (2E,6E,10E)-geranylgeranyl diphosphate + diphosphate. It participates in secondary metabolite biosynthesis; terpenoid biosynthesis. In terms of biological role, geranylgeranyl pyrophosphate synthase; part of the gene cluster that mediates the biosynthesis of pleuromutilin, a tricyclic diterpene showing antibacterial properties. The geranylgeranyl diphosphate (GGPP) synthase ple4 catalyzes the first step in pleuromutilin biosynthesis. GGPP is then substrate of the premutilin synthase (PS) ple3 to yield premutilin. Premutilin synthase is a bifunctional enzyme composed of the fusion of a class II diterpene cyclase (DTC) and a class I diterpene synthase (DTS), with the corresponding domains and active sites containing characteristic aspartate-rich motifs. GGPP is first converted to mutildienyl-diphosphate (MPP) at the class II DTC site. MPP is subsequently further cyclized at the class I DTS site, followed by a 1,5-hydride shift and addition of water prior to terminating deprotonation, to yield premutilin. The cytochrome P450 monooxygenases ple5 and ple6 hydroxylate premutilin at C-11 and C-3, respectively, producing 11-hydroxypremutilin and 3-hydroxypremutilin. The combination of the actions of both ple5 and ple6 leads to the production of 3,11-dihydroxypremutilin. The short chain dehydrogenase ple7 further converts 3,11-dihydroxypremutilin into mutilin. The acetyltransferase ple2 then acetylates mutilin to produce 14-O-acetylmutilin. Finally, the cytochrome P450 monooxygenase ple1 catalyzes hydroxylation on the alpha position of the acetyl side chain of 14-O-acetylmutilin to yield pleuromutilin. The polypeptide is Geranylgeranyl pyrophosphate synthase (Rhodocybe pseudopiperita (Clitopilus pseudopiperitus)).